A 237-amino-acid chain; its full sequence is DNA replication inhibitor toxin SocB (237 aa).

As to quaternary structure, interacts with cognate antitoxin SocA and with beta sliding clamp (dnaN). Degraded by ClpXP, recognition of SocB by ClpX requires SocA.

Its subcellular location is the cytoplasm. Functionally, toxic component of an atypical type II toxin-antitoxin (TA) system. Upon overexpression in the absence of its cognate antitoxin SocA, leads to inhibition of colony formation, cellular filamentation, incomplete DNA replication and induction of the SOS response. Exercises toxicity by binding the beta sliding clamp (dnaN), blocking DNA replication and leading to premature replication fork collapse and incomplete cell division. Unlike most type II TA systems, the SocB toxin is unstable and targeted by its cognate antitoxin SocA for degradation by ClpXP. Not toxic upon expression in E.coli. This is DNA replication inhibitor toxin SocB from Caulobacter vibrioides (strain NA1000 / CB15N) (Caulobacter crescentus).